The sequence spans 148 residues: NADPH-dependent 7-cyano-7-deazaguanine reductase (148 aa).

Cys50 serves as the catalytic Thioimide intermediate. The Proton donor role is filled by Asp57. Residues 72 to 74 (VES) and 91 to 92 (HE) contribute to the substrate site.

The protein belongs to the GTP cyclohydrolase I family. QueF type 1 subfamily.

Its subcellular location is the cytoplasm. The enzyme catalyses 7-aminomethyl-7-carbaguanine + 2 NADP(+) = 7-cyano-7-deazaguanine + 2 NADPH + 3 H(+). It participates in tRNA modification; tRNA-queuosine biosynthesis. Functionally, catalyzes the NADPH-dependent reduction of 7-cyano-7-deazaguanine (preQ0) to 7-aminomethyl-7-deazaguanine (preQ1). In Helicobacter pylori (strain HPAG1), this protein is NADPH-dependent 7-cyano-7-deazaguanine reductase.